A 920-amino-acid chain; its full sequence is Anoctamin-4 (920 aa).

The Cytoplasmic portion of the chain corresponds to 1-323 (METSSSGITN…LYFAWLGWYT (323 aa)). Residues 38-64 (KDDDSLLHPGNLTSTSDDASRLEAGGE) are disordered. Residues 324–344 (GMLFPAAFIGLFVFLYGVITL) traverse the membrane as a helical segment. The Extracellular segment spans residues 345-389 (DHCQVSKEVCQATDIIMCPVCDKYCPFMRLSDSCVYAKVTHLFDN). A helical membrane pass occupies residues 390-410 (GATVFFAVFMAVWATVFLEFW). Residues 411-470 (KRRRAVIAYDWDLIDWEEEEEEIRPQFEAKYSKKERMNPISGKPEPYQAFADKCSRLIVS) lie on the Cytoplasmic side of the membrane. Residues 471–491 (ASGIFFMICVVIAAVFGIVIY) traverse the membrane as a helical segment. At 492-512 (RVVTVSTFAAFKWALIRNNSQ) the chain is on the extracellular side. N-linked (GlcNAc...) asparagine glycosylation occurs at Asn509. Residues 513–533 (VATTGTAVCINFCIIMLLNVL) traverse the membrane as a helical segment. Topologically, residues 534–560 (YEKVALLLTNLEQPRTESEWENSFTLK) are cytoplasmic. A helical transmembrane segment spans residues 561–581 (MFLFQFVNLNSSTFYIAFFLG). Topologically, residues 582–680 (RFTGHPGAYL…AYGLFDEYLE (99 aa)) are extracellular. A helical membrane pass occupies residues 681–701 (MILQFGFTTIFVAAFPLAPLL). At 702–733 (ALLNNIIEIRLDAYKFVTQWRRPLASRAKDIG) the chain is on the cytoplasmic side. The helical transmembrane segment at 734–754 (IWYGILEGIGILSVITNAFVI) threads the bilayer. Residues 755–850 (AITSDFIPRL…QFWHVLAARL (96 aa)) lie on the Extracellular side of the membrane. N-linked (GlcNAc...) asparagine glycosylation is found at Asn789 and Asn802. A helical membrane pass occupies residues 851–871 (AFIIVFEHLVFCIKHLISYLI). Residues 872 to 920 (PDLPKDLRDRMRREKYLIQEMMYEAELERLQKERKERKKNGKAHHNEWP) are Cytoplasmic-facing.

This sequence belongs to the anoctamin family.

It localises to the cell membrane. It catalyses the reaction a 1,2-diacyl-sn-glycero-3-phospho-L-serine(in) = a 1,2-diacyl-sn-glycero-3-phospho-L-serine(out). The enzyme catalyses a beta-D-galactosyl-(1&lt;-&gt;1')-N-acylsphing-4-enine(out) = a beta-D-galactosyl-(1&lt;-&gt;1')-N-acylsphing-4-enine(in). It carries out the reaction a 1,2-diacyl-sn-glycero-3-phosphocholine(in) = a 1,2-diacyl-sn-glycero-3-phosphocholine(out). Its function is as follows. Has calcium-dependent phospholipid scramblase activity; scrambles phosphatidylserine, phosphatidylcholine and galactosylceramide. Does not exhibit calcium-activated chloride channel (CaCC) activity. The chain is Anoctamin-4 from Bos taurus (Bovine).